The chain runs to 678 residues: MTKNLLVELGLEELPAYVVTPSEKQLGEKMAAFLKENRLSFEAIQTFSTPRRLAVRVTGLSDKQSDLTEDFKGPAKKIALDSDGNFTKAAQGFVRGKGLTVEDIEFREIKGEEYVYVTKEEVGQAVEAIVPGVVDVLKSLTFPVSMHWAGNSFEYIRPVHTLTVLLDEQEFDLDFLDIKGSRVSRGHRFLGKETKIQSALSYEEDLRKQFVIADPCEREQMIVDQIKEIEAKHGVRIEIDADLLNEVLNLVEYPTAFMGSFDAKYLEVPEEVLVTSMKEHQRYFVVRDQDGKLLPNFISVRNGNAERLKNVIKGNEKVLVARLEDGEFFWREDQKLVISDLVEKLNNVTFHEKIGSLREHMIRTGQITVLLAEKAGLSVDETVDLARAAAIYKFDLLTGMVGEFDELQGIMGEKYTLLAGETPAVAAAIREHYMPTSAEGELPESKVGAVLAIADKLDTILSFFSVGLIPSGSNDPYALRRATQGVVRILDAFGWHIAMDELIDSLYALKFDSLTYENKAEVMDFIKARVDKMMGSTPKDIKEAVLAGSNFVVADMLEAASALVEVSKEEDFKPSVESLSRAFNLAEKAEGVATVDSALFENDQEKALAEAVETLVLSGPASQQLKQLFALSPVIDAFFENTMVMAEDQAVRQNRLAILSQLTKKAAKFACFNQINTK.

Belongs to the class-II aminoacyl-tRNA synthetase family. As to quaternary structure, tetramer of two alpha and two beta subunits.

Its subcellular location is the cytoplasm. The catalysed reaction is tRNA(Gly) + glycine + ATP = glycyl-tRNA(Gly) + AMP + diphosphate. This Streptococcus pneumoniae serotype 19F (strain G54) protein is Glycine--tRNA ligase beta subunit.